A 316-amino-acid polypeptide reads, in one-letter code: Methionyl-tRNA formyltransferase (316 aa).

Position 117-120 (117-120) interacts with (6S)-5,6,7,8-tetrahydrofolate; it reads SLLP.

Belongs to the Fmt family.

The catalysed reaction is L-methionyl-tRNA(fMet) + (6R)-10-formyltetrahydrofolate = N-formyl-L-methionyl-tRNA(fMet) + (6S)-5,6,7,8-tetrahydrofolate + H(+). Attaches a formyl group to the free amino group of methionyl-tRNA(fMet). The formyl group appears to play a dual role in the initiator identity of N-formylmethionyl-tRNA by promoting its recognition by IF2 and preventing the misappropriation of this tRNA by the elongation apparatus. The polypeptide is Methionyl-tRNA formyltransferase (Janthinobacterium sp. (strain Marseille) (Minibacterium massiliensis)).